Reading from the N-terminus, the 475-residue chain is Glutamate--tRNA ligase (475 aa).

Residues 8-18 carry the 'HIGH' region motif; the sequence is PSPTGTLHIGT. A 'KMSKS' region motif is present at residues 247–251; the sequence is KLSKR. Lys250 contributes to the ATP binding site.

The protein belongs to the class-I aminoacyl-tRNA synthetase family. Glutamate--tRNA ligase type 1 subfamily. Monomer.

The protein localises to the cytoplasm. It carries out the reaction tRNA(Glu) + L-glutamate + ATP = L-glutamyl-tRNA(Glu) + AMP + diphosphate. Catalyzes the attachment of glutamate to tRNA(Glu) in a two-step reaction: glutamate is first activated by ATP to form Glu-AMP and then transferred to the acceptor end of tRNA(Glu). This Synechococcus sp. (strain RCC307) protein is Glutamate--tRNA ligase.